We begin with the raw amino-acid sequence, 372 residues long: NAD(P)H-quinone oxidoreductase subunit 1 (372 aa).

8 consecutive transmembrane segments (helical) span residues 31–51, 65–85, 97–117, 128–148, 176–196, 254–276, 304–324, and 347–367; these read PLPM…VVWL, PEFI…KLVL, LLFT…YLIL, VGLG…GLLM, LALS…VDIV, FALF…AVLY, LIFA…LIFL, and FLLP…LAFP.

Belongs to the complex I subunit 1 family. NDH-1 is composed of at least 11 different subunits.

The protein resides in the cellular thylakoid membrane. The enzyme catalyses a plastoquinone + NADH + (n+1) H(+)(in) = a plastoquinol + NAD(+) + n H(+)(out). It catalyses the reaction a plastoquinone + NADPH + (n+1) H(+)(in) = a plastoquinol + NADP(+) + n H(+)(out). Functionally, NDH-1 shuttles electrons from an unknown electron donor, via FMN and iron-sulfur (Fe-S) centers, to quinones in the respiratory and/or the photosynthetic chain. The immediate electron acceptor for the enzyme in this species is believed to be plastoquinone. Couples the redox reaction to proton translocation, and thus conserves the redox energy in a proton gradient. In Leptolyngbya boryana (Plectonema boryanum), this protein is NAD(P)H-quinone oxidoreductase subunit 1.